Reading from the N-terminus, the 268-residue chain is Thiazole synthase (268 aa).

Catalysis depends on Lys-100, which acts as the Schiff-base intermediate with DXP. 1-deoxy-D-xylulose 5-phosphate is bound by residues Gly-161, 187-188 (AG), and 209-210 (NT). The disordered stretch occupies residues 248–268 (ASPSSPAEGMFTGTQHPAANS). The segment covering 259–268 (TGTQHPAANS) has biased composition (polar residues).

Belongs to the ThiG family. As to quaternary structure, homotetramer. Forms heterodimers with either ThiH or ThiS.

It localises to the cytoplasm. The enzyme catalyses [ThiS sulfur-carrier protein]-C-terminal-Gly-aminoethanethioate + 2-iminoacetate + 1-deoxy-D-xylulose 5-phosphate = [ThiS sulfur-carrier protein]-C-terminal Gly-Gly + 2-[(2R,5Z)-2-carboxy-4-methylthiazol-5(2H)-ylidene]ethyl phosphate + 2 H2O + H(+). Its pathway is cofactor biosynthesis; thiamine diphosphate biosynthesis. Functionally, catalyzes the rearrangement of 1-deoxy-D-xylulose 5-phosphate (DXP) to produce the thiazole phosphate moiety of thiamine. Sulfur is provided by the thiocarboxylate moiety of the carrier protein ThiS. In vitro, sulfur can be provided by H(2)S. In Nitrosomonas europaea (strain ATCC 19718 / CIP 103999 / KCTC 2705 / NBRC 14298), this protein is Thiazole synthase.